We begin with the raw amino-acid sequence, 450 residues long: tRNA modification GTPase MnmE (450 aa).

Lysine 21, glutamate 78, and lysine 117 together coordinate (6S)-5-formyl-5,6,7,8-tetrahydrofolate. In terms of domain architecture, TrmE-type G spans 213–376 (GHALSIVGKP…LSQKISAFFP (164 aa)). Asparagine 223 contributes to the K(+) binding site. GTP-binding positions include 223 to 228 (NAGKSS), 242 to 248 (SDIKGTT), and 267 to 270 (DTAG). Serine 227 serves as a coordination point for Mg(2+). Positions 242, 244, and 247 each coordinate K(+). Threonine 248 is a Mg(2+) binding site. (6S)-5-formyl-5,6,7,8-tetrahydrofolate is bound at residue lysine 450.

The protein belongs to the TRAFAC class TrmE-Era-EngA-EngB-Septin-like GTPase superfamily. TrmE GTPase family. As to quaternary structure, homodimer. Heterotetramer of two MnmE and two MnmG subunits. K(+) serves as cofactor.

Its subcellular location is the cytoplasm. In terms of biological role, exhibits a very high intrinsic GTPase hydrolysis rate. Involved in the addition of a carboxymethylaminomethyl (cmnm) group at the wobble position (U34) of certain tRNAs, forming tRNA-cmnm(5)s(2)U34. In Helicobacter pylori (strain Shi470), this protein is tRNA modification GTPase MnmE.